The sequence spans 630 residues: uncharacterized protein (630 aa).

Transmembrane regions (helical) follow at residues 254-274, 504-524, 564-584, and 601-621; these read MFYAVINTYLIMLISVEELRV, IALLESLSFSWLDPFYGLTSI, MIFAYIAAFVVGFINFFSMVF, and IIVISIASVLAFILIVIAVLF.

The protein resides in the cell membrane. This is an uncharacterized protein from Mycoplasma genitalium (strain ATCC 33530 / DSM 19775 / NCTC 10195 / G37) (Mycoplasmoides genitalium).